Reading from the N-terminus, the 253-residue chain is MAGHSKFKNIQHRKGAQDKKRAKVFTKLIREIVTAAKTGSSNNPENNPRLRNALTAARSQNLPKERIDKAINSANDSSNNENYTEIRYEGYAPNGIAIIVEALTDNKNRTAAEVRSSFTKYGGSLGETGSVNYLFNHCGVIQYPINIASNKDILEAVIEAGGHDIISDDTTHTIYTDIENFSKVLEFLTGKYGIPEDSYIGWIPLNTIIIDDKEKAEKLLKLVEVLEESDDVQRVFGNYELSDDVYEIIQGEP.

Residues 1–21 are disordered; it reads MAGHSKFKNIQHRKGAQDKKR.

The protein belongs to the TACO1 family.

Its subcellular location is the cytoplasm. The chain is Probable transcriptional regulatory protein RC0681 from Rickettsia conorii (strain ATCC VR-613 / Malish 7).